The primary structure comprises 211 residues: Guanylate kinase (211 aa).

In terms of domain architecture, Guanylate kinase-like spans 5 to 184 (GLLIVFSGPS…AAERVKRIIE (180 aa)). 12–19 (GPSGVGKG) provides a ligand contact to ATP.

This sequence belongs to the guanylate kinase family.

The protein resides in the cytoplasm. The catalysed reaction is GMP + ATP = GDP + ADP. Functionally, essential for recycling GMP and indirectly, cGMP. This is Guanylate kinase from Streptococcus pyogenes serotype M3 (strain SSI-1).